The primary structure comprises 1066 residues: FHIP family protein GH13096 (1066 aa).

Over residues 1–15 (MSWLRTSPLRQSLTR) the composition is skewed to polar residues. Residues 1–33 (MSWLRTSPLRQSLTRNSGGNGSGGSGNSGNASA) form a disordered region. Over residues 18–27 (GGNGSGGSGN) the composition is skewed to gly residues. A Phosphoserine modification is found at S512. Disordered regions lie at residues 647-688 (SFKW…NSSG), 827-885 (DNSP…RSDN), and 942-1010 (SRGV…FNSE). Low complexity predominate over residues 658–687 (NDATTTTATSDPDVEHNNSSNHNNSSINSS). At S829 the chain carries Phosphoserine. Residues 836 to 856 (HQQQQLQHTTNSTHQQQQAQQ) are compositionally biased toward low complexity. Positions 950 to 963 (PRGNTCETSLSTTP) are enriched in polar residues. A compositionally biased stretch (low complexity) spans 967–996 (AQATSASSTNSSIGGSTQTLSATHSSSTLH). Residues 1001–1010 (GPQTASFNSE) are compositionally biased toward polar residues.

This sequence belongs to the FHIP family.

The protein is FHIP family protein GH13096 of Drosophila grimshawi (Hawaiian fruit fly).